Consider the following 375-residue polypeptide: Probable peptidoglycan glycosyltransferase FtsW (375 aa).

The Cytoplasmic portion of the chain corresponds to 1-16 (MNLNFKLNLKEIERYD). Residues 17 to 37 (LVILLMAVALTCFGVVMVYSA) form a helical membrane-spanning segment. At 38-49 (SSVMATKKFHDG) the chain is on the periplasmic side. The chain crosses the membrane as a helical span at residues 50–70 (FYFLKRQGIYAILGCAAMIVA). Residues 71 to 81 (MRIDYRQWREY) are Cytoplasmic-facing. A helical transmembrane segment spans residues 82–102 (AVPILLGCLLLLLLVFIPGIG). Residues 103–145 (GAAKGASRWIRFPGFNLQPSELAKIALIMYMAYSLDKKQEKVK) lie on the Periplasmic side of the membrane. A helical membrane pass occupies residues 146-166 (FFSTGFAPYMVLLAILLAILL). The Cytoplasmic portion of the chain corresponds to 167-169 (KQH). The chain crosses the membrane as a helical span at residues 170-190 (DLGSALTMGGVAILMLFAAGT). Over 191 to 193 (RPR) the chain is Periplasmic. Residues 194–214 (YILGMVVLTLPFLYFLVMNVD) traverse the membrane as a helical segment. Residues 215 to 233 (YRRRRILAYLNPWEDPTNT) lie on the Cytoplasmic side of the membrane. A helical membrane pass occupies residues 234-254 (GFQIIQSWLAFGNGGIIGQGL). Residues 255–279 (GEGKQKMFFLPEAHTDFILSVVGEE) are Periplasmic-facing. Residues 280–300 (LGLIGVIVIAAMFLMLVLRGV) traverse the membrane as a helical segment. Residues 301–312 (RVALMAQDPFGR) lie on the Cytoplasmic side of the membrane. The chain crosses the membrane as a helical span at residues 313–333 (FLAFGIVTLLGIQAFVNMGVV). The Periplasmic segment spans residues 334-343 (TGLLPTKGLA). Residues 344 to 364 (LPFISYGGSSLIVTLFAVGIL) traverse the membrane as a helical segment. The Cytoplasmic portion of the chain corresponds to 365-375 (LNVSTRMKGTP).

Belongs to the SEDS family. FtsW subfamily.

It localises to the cell inner membrane. The catalysed reaction is [GlcNAc-(1-&gt;4)-Mur2Ac(oyl-L-Ala-gamma-D-Glu-L-Lys-D-Ala-D-Ala)](n)-di-trans,octa-cis-undecaprenyl diphosphate + beta-D-GlcNAc-(1-&gt;4)-Mur2Ac(oyl-L-Ala-gamma-D-Glu-L-Lys-D-Ala-D-Ala)-di-trans,octa-cis-undecaprenyl diphosphate = [GlcNAc-(1-&gt;4)-Mur2Ac(oyl-L-Ala-gamma-D-Glu-L-Lys-D-Ala-D-Ala)](n+1)-di-trans,octa-cis-undecaprenyl diphosphate + di-trans,octa-cis-undecaprenyl diphosphate + H(+). The protein operates within cell wall biogenesis; peptidoglycan biosynthesis. Functionally, peptidoglycan polymerase that is essential for cell division. This is Probable peptidoglycan glycosyltransferase FtsW from Geobacter metallireducens (strain ATCC 53774 / DSM 7210 / GS-15).